Reading from the N-terminus, the 274-residue chain is Regulator of G-protein signaling rgs-11 (274 aa).

The RGS domain occupies 137–256; it reads SPGLLAASKY…LEDPLYLDLL (120 aa).

This is Regulator of G-protein signaling rgs-11 (rgs-11) from Caenorhabditis elegans.